Here is a 471-residue protein sequence, read N- to C-terminus: ATP synthase subunit beta (471 aa).

158–165 (GGAGCGKT) provides a ligand contact to ATP.

It belongs to the ATPase alpha/beta chains family. As to quaternary structure, F-type ATPases have 2 components, CF(1) - the catalytic core - and CF(0) - the membrane proton channel. CF(1) has five subunits: alpha(3), beta(3), gamma(1), delta(1), epsilon(1). CF(0) has three main subunits: a(1), b(2) and c(9-12). The alpha and beta chains form an alternating ring which encloses part of the gamma chain. CF(1) is attached to CF(0) by a central stalk formed by the gamma and epsilon chains, while a peripheral stalk is formed by the delta and b chains.

Its subcellular location is the cell inner membrane. It carries out the reaction ATP + H2O + 4 H(+)(in) = ADP + phosphate + 5 H(+)(out). In terms of biological role, produces ATP from ADP in the presence of a proton gradient across the membrane. The catalytic sites are hosted primarily by the beta subunits. This Desulfotalea psychrophila (strain LSv54 / DSM 12343) protein is ATP synthase subunit beta.